Reading from the N-terminus, the 313-residue chain is MLDNVLRIATRQSPLALWQAHYVKDKLMASHPGLVVELVPMVTRGDVILDTPLAKVGGKGLFVKELEVALLENRADIAVHSMKDVPVEFPQGLGLVTICEREDPRDAFVSNNYDSLDALPAGSIVGTSSLRRQCQLAERRPDLIIRSLRGNVGTRLSKLDNGEYDAIILAVAGLKRLGLESRIRAALPPEISLPAVGQGAVGIECRLDDTRTRELLAALNHHETALRVTAERAMNTRLEGGCQVPIGSYAELIDGEIWLRALVGAPDGSQIIRGERRGAPQNAEQMGISLAEELLNNGAREILAEVYNGDAPA.

An S-(dipyrrolylmethanemethyl)cysteine modification is found at Cys242.

This sequence belongs to the HMBS family. In terms of assembly, monomer. Dipyrromethane serves as cofactor.

It carries out the reaction 4 porphobilinogen + H2O = hydroxymethylbilane + 4 NH4(+). It functions in the pathway porphyrin-containing compound metabolism; protoporphyrin-IX biosynthesis; coproporphyrinogen-III from 5-aminolevulinate: step 2/4. Functionally, tetrapolymerization of the monopyrrole PBG into the hydroxymethylbilane pre-uroporphyrinogen in several discrete steps. The polypeptide is Porphobilinogen deaminase (Escherichia coli (strain SE11)).